A 1185-amino-acid chain; its full sequence is Pyruvate carboxylase (1185 aa).

The Biotin carboxylation domain maps to K32 to E484. ATP-binding residues include K150, E234, and H269. An ATP-grasp domain is found at R154–A351. R326 is an active-site residue. A Pyruvate carboxyltransferase domain is found at G570–R838. Residues R578–Q582 and R651 contribute to the substrate site. Residue D579 participates in a divalent metal cation binding. Residues K747, H777, and H779 each contribute to the a divalent metal cation site. Position 747 is an N6-carboxylysine (K747). T912 contributes to the substrate binding site. The region spanning R1108 to E1183 is the Biotinyl-binding domain. Residue K1149 is modified to N6-biotinyllysine.

Biotin serves as cofactor. Zn(2+) is required as a cofactor.

The protein resides in the cytoplasm. It carries out the reaction hydrogencarbonate + pyruvate + ATP = oxaloacetate + ADP + phosphate + H(+). The protein operates within carbohydrate biosynthesis; gluconeogenesis. In terms of biological role, pyruvate carboxylase catalyzes a 2-step reaction, involving the ATP-dependent carboxylation of the covalently attached biotin in the first step and the transfer of the carboxyl group to pyruvate in the second. The protein is Pyruvate carboxylase (pyr1) of Schizosaccharomyces pombe (strain 972 / ATCC 24843) (Fission yeast).